The chain runs to 307 residues: Nitric oxide synthase-interacting protein homolog (307 aa).

The interval 120 to 159 (PAMTPAHSSAAASEKPSTSSAAAAASSESSSASSISNMTN) is disordered. A compositionally biased stretch (low complexity) spans 127–155 (SSAAASEKPSTSSAAAAASSESSSASSIS).

This sequence belongs to the NOSIP family.

It localises to the cytoplasm. Its subcellular location is the nucleus. Functionally, negatively regulates nitric oxide production by inducing nitric oxide synthase translocation to actin cytoskeleton and inhibiting its enzymatic activity. In Drosophila melanogaster (Fruit fly), this protein is Nitric oxide synthase-interacting protein homolog.